The following is a 303-amino-acid chain: Monoglyceride lipase (303 aa).

Thr-10 carries the post-translational modification Phosphothreonine. 3'-nitrotyrosine is present on Tyr-58. The Nucleophile role is filled by Ser-122. Catalysis depends on charge relay system residues Asp-239 and His-269.

Belongs to the AB hydrolase superfamily. Monoacylglycerol lipase family. As to quaternary structure, homodimer. Detected in adipose tissue, lung, liver, kidney, brain and heart.

Its subcellular location is the cytoplasm. The protein resides in the cytosol. It localises to the membrane. It carries out the reaction Hydrolyzes glycerol monoesters of long-chain fatty acids.. It catalyses the reaction a 1-acylglycerol + H2O = glycerol + a fatty acid + H(+). The enzyme catalyses a 2-acylglycerol + H2O = glycerol + a fatty acid + H(+). The catalysed reaction is 1-octanoylglycerol + H2O = octanoate + glycerol + H(+). It carries out the reaction 2-(5Z,8Z,11Z,14Z-eicosatetraenoyl)-glycerol + H2O = glycerol + (5Z,8Z,11Z,14Z)-eicosatetraenoate + H(+). It catalyses the reaction 1-decanoylglycerol + H2O = decanoate + glycerol + H(+). The enzyme catalyses 1-dodecanoylglycerol + H2O = dodecanoate + glycerol + H(+). The catalysed reaction is 1-tetradecanoylglycerol + H2O = tetradecanoate + glycerol + H(+). It carries out the reaction 2-hexadecanoylglycerol + H2O = glycerol + hexadecanoate + H(+). It catalyses the reaction 1-(9Z-octadecenoyl)-glycerol + H2O = glycerol + (9Z)-octadecenoate + H(+). The enzyme catalyses 2-(9Z-octadecenoyl)-glycerol + H2O = glycerol + (9Z)-octadecenoate + H(+). The catalysed reaction is 2-(9Z,12Z-octadecadienoyl)-glycerol + H2O = (9Z,12Z)-octadecadienoate + glycerol + H(+). It carries out the reaction 1-(5Z,8Z,11Z,14Z-eicosatetraenoyl)-glycerol + H2O = glycerol + (5Z,8Z,11Z,14Z)-eicosatetraenoate + H(+). It catalyses the reaction 1-(9Z,12Z-octadecadienoyl)-glycerol + H2O = (9Z,12Z)-octadecadienoate + glycerol + H(+). The enzyme catalyses 1-hexadecanoylglycerol + H2O = glycerol + hexadecanoate + H(+). The catalysed reaction is 1-octadecanoylglycerol + H2O = octadecanoate + glycerol + H(+). It carries out the reaction prostaglandin E2 1-glyceryl ester + H2O = prostaglandin E2 + glycerol + H(+). It catalyses the reaction prostaglandin D2-1-glycerol ester + H2O = prostaglandin D2 + glycerol + H(+). The enzyme catalyses 2-glyceryl-15-deoxy-Delta(12,14)-prostaglandin J2 + H2O = 15-deoxy-Delta(12,14)-prostaglandin J2 + glycerol + H(+). The catalysed reaction is prostaglandin F2alpha 1-glyceryl ester + H2O = prostaglandin F2alpha + glycerol + H(+). The protein operates within glycerolipid metabolism; triacylglycerol degradation. Functionally, converts monoacylglycerides to free fatty acids and glycerol. Hydrolyzes the endocannabinoid 2-arachidonoylglycerol, and thereby contributes to the regulation of endocannabinoid signaling, nociperception and perception of pain. Regulates the levels of fatty acids that serve as signaling molecules and promote cancer cell migration, invasion and tumor growth. The polypeptide is Monoglyceride lipase (Homo sapiens (Human)).